The following is a 347-amino-acid chain: Lipoyl synthase (347 aa).

[4Fe-4S] cluster is bound by residues C77, C82, C88, C103, C107, C110, and S317. In terms of domain architecture, Radical SAM core spans 89–306; the sequence is FADGTATFMI…MDYGKKIGFF (218 aa).

The protein belongs to the radical SAM superfamily. Lipoyl synthase family. [4Fe-4S] cluster serves as cofactor.

It is found in the cytoplasm. The enzyme catalyses [[Fe-S] cluster scaffold protein carrying a second [4Fe-4S](2+) cluster] + N(6)-octanoyl-L-lysyl-[protein] + 2 oxidized [2Fe-2S]-[ferredoxin] + 2 S-adenosyl-L-methionine + 4 H(+) = [[Fe-S] cluster scaffold protein] + N(6)-[(R)-dihydrolipoyl]-L-lysyl-[protein] + 4 Fe(3+) + 2 hydrogen sulfide + 2 5'-deoxyadenosine + 2 L-methionine + 2 reduced [2Fe-2S]-[ferredoxin]. Its pathway is protein modification; protein lipoylation via endogenous pathway; protein N(6)-(lipoyl)lysine from octanoyl-[acyl-carrier-protein]: step 2/2. Functionally, catalyzes the radical-mediated insertion of two sulfur atoms into the C-6 and C-8 positions of the octanoyl moiety bound to the lipoyl domains of lipoate-dependent enzymes, thereby converting the octanoylated domains into lipoylated derivatives. The polypeptide is Lipoyl synthase (Psychrobacter arcticus (strain DSM 17307 / VKM B-2377 / 273-4)).